Consider the following 215-residue polypeptide: Cytochrome b6 (215 aa).

The chain crosses the membrane as a helical span at residues 32–52 (IFYCLGGITLTCFLVQVATGF). Cys-35 serves as a coordination point for heme c. His-86 and His-100 together coordinate heme b. 3 helical membrane passes run 90–110 (ASMMVLMMILHIFRVYLTGGF), 116–136 (LTWVTGVILAVLTVSFGVTGY), and 186–206 (LHTFVLPLLTAIFMLMHFLMI). 2 residues coordinate heme b: His-187 and His-202.

Belongs to the cytochrome b family. PetB subfamily. The 4 large subunits of the cytochrome b6-f complex are cytochrome b6, subunit IV (17 kDa polypeptide, PetD), cytochrome f and the Rieske protein, while the 4 small subunits are PetG, PetL, PetM and PetN. The complex functions as a dimer. Heme b serves as cofactor. It depends on heme c as a cofactor.

Its subcellular location is the plastid. It is found in the chloroplast thylakoid membrane. Its function is as follows. Component of the cytochrome b6-f complex, which mediates electron transfer between photosystem II (PSII) and photosystem I (PSI), cyclic electron flow around PSI, and state transitions. The chain is Cytochrome b6 from Marchantia polymorpha (Common liverwort).